A 238-amino-acid polypeptide reads, in one-letter code: Complement C1q-like protein 4 (238 aa).

The signal sequence occupies residues 1-15; that stretch reads MVLLLLVAIPLLVHS. A disordered region spans residues 36–101; that stretch reads GPRGPGPDGA…PPGPGPGGVA (66 aa). Positions 53 to 96 constitute a Collagen-like domain; the sequence is PPGAKGEVGRRGKAGLRGPPGPPGPRGPPGEPGRPGPPGPPGPG. Positions 71–96 are enriched in pro residues; it reads PPGPPGPRGPPGEPGRPGPPGPPGPG. The C1q domain occupies 105–238; sequence GYVPRIAFYA…TFSGFIIYPD (134 aa).

Forms homooligomers, predominantly dimers or trimers. Forms heterooligomers with C1QL1, C1QL2 and C1QL3, when proteins are coexpressed; this interaction does not occur after secretion. Interacts with ADGRB3. Highest expression levels in testis and adipose tissue, lower levels in skeletal muscle and kidney.

The protein resides in the secreted. Its function is as follows. May regulate the number of excitatory synapses that are formed on hippocampus neurons. Has no effect on inhibitory synapses. May inhibit adipocyte differentiation at an early stage of the process. The polypeptide is Complement C1q-like protein 4 (C1QL4) (Homo sapiens (Human)).